Reading from the N-terminus, the 212-residue chain is Large ribosomal subunit protein uL4 (212 aa).

Positions 54-65 (SQKSRSDVSGSN) are enriched in polar residues. Residues 54 to 85 (SQKSRSDVSGSNKKPWRQKGTGRARSGSVKSP) form a disordered region.

Belongs to the universal ribosomal protein uL4 family. As to quaternary structure, part of the 50S ribosomal subunit.

In terms of biological role, one of the primary rRNA binding proteins, this protein initially binds near the 5'-end of the 23S rRNA. It is important during the early stages of 50S assembly. It makes multiple contacts with different domains of the 23S rRNA in the assembled 50S subunit and ribosome. Its function is as follows. Forms part of the polypeptide exit tunnel. This Blochmanniella floridana protein is Large ribosomal subunit protein uL4.